A 503-amino-acid polypeptide reads, in one-letter code: Sodium/hydrogen exchanger 3 (503 aa).

Over 1–22 (MVIGLSTMLEKTEALFASDHAS) the chain is Cytoplasmic. A helical transmembrane segment spans residues 23–43 (VVSMNLFVALLCACIVLGHLL). Topologically, residues 44–51 (EETRWMNE) are vacuolar. Asn-50 carries an N-linked (GlcNAc...) asparagine glycan. Residues 52–72 (SITALIIGSCTGIVILLISGG) traverse the membrane as a helical segment. Over 73 to 76 (KSSR) the chain is Cytoplasmic. An intramembrane region (helical) is located at residues 77–97 (ILVFSEDLFFIYLLPPIIFNA). The Cytoplasmic segment spans residues 98-109 (GFQVKKKQFFRN). Residues 110-130 (FMTIMLFGAIGTLISFVIISF) traverse the membrane as a helical segment. The Vacuolar segment spans residues 131-138 (GAKHLFEK). Residues 139 to 159 (MNIGDLTIADYLAIGAIFSAT) traverse the membrane as a helical segment. At 160-174 (DSVCTLQVLNQDETP) the chain is on the cytoplasmic side. A helical transmembrane segment spans residues 175 to 195 (LLYSLVFGEGVVNDATSVVLF). Residues 196–219 (NAIQRFDLTNINSAIALEFAGNFF) lie on the Vacuolar side of the membrane. Residues 220 to 240 (YLFILSTALGVAAGLLSAFVI) form a helical membrane-spanning segment. At 241-265 (KKLYIGRHSTDREVALMMLLAYLSY) the chain is on the cytoplasmic side. The helical transmembrane segment at 266–286 (MLAELFHLSSILTVFFCGIVM) threads the bilayer. Residues 287 to 305 (SHYTWHNVTDKSKVTTKHT) lie on the Vacuolar side of the membrane. Asn-293 carries an N-linked (GlcNAc...) asparagine glycan. Residues 306 to 326 (FAAMSFLAEIFIFLYVGMDAL) form a helical membrane-spanning segment. Residues 327–345 (DIEKWDVVRNSPGQSIGVS) lie on the Cytoplasmic side of the membrane. A helical transmembrane segment spans residues 346 to 366 (SILLGLILLGRAAFVFPLSFL). At 367 to 383 (SNLTKSSPDEKIDLKKQ) the chain is on the vacuolar side. The N-linked (GlcNAc...) asparagine glycan is linked to Asn-368. Residues 384–406 (VTIWWAGLMRGAVSMALAYNQFT) form a helical membrane-spanning segment. Over 407–416 (TSGHTKVLGN) the chain is Cytoplasmic. Residues 417–437 (AIMITSTITVVLFSTVVFGLL) form a helical membrane-spanning segment. At 438-503 (TKPLVKHLQP…FWKSPSRFTH (66 aa)) the chain is on the vacuolar side.

This sequence belongs to the monovalent cation:proton antiporter 1 (CPA1) transporter (TC 2.A.36) family. In terms of tissue distribution, expressed in roots.

Its subcellular location is the vacuole membrane. It carries out the reaction Na(+)(in) + H(+)(out) = Na(+)(out) + H(+)(in). The catalysed reaction is K(+)(in) + H(+)(out) = K(+)(out) + H(+)(in). Functionally, may act in low affinity electroneutral exchange of protons for cations such as Na(+) or K(+) across membranes. May also exchange Li(+) and Cs(+) with a lower affinity. In Arabidopsis thaliana (Mouse-ear cress), this protein is Sodium/hydrogen exchanger 3 (NHX3).